A 352-amino-acid chain; its full sequence is C-C chemokine receptor type 5 (352 aa).

Topologically, residues 1–30 (MDYQVSSPTYDIDYYTSEPCQKINVKQIAA) are extracellular. Tyrosine 3 is subject to Sulfotyrosine. O-linked (GalNAc...) serine glycosylation is found at serine 6 and serine 7. Sulfotyrosine occurs at positions 10, 14, and 15. Disulfide bonds link cysteine 20–cysteine 269 and cysteine 101–cysteine 178. Residues 31 to 58 (RLLPPLYSLVFIFGFVGNILVVLILINC) form a helical membrane-spanning segment. The Cytoplasmic segment spans residues 59–68 (KRLKSMTDIY). A helical membrane pass occupies residues 69–89 (LLNLAISDLLFLLTVPFWAHY). Topologically, residues 90-102 (AAAQWDFGNTMCQ) are extracellular. Residues 103–124 (LLTGLYFIGFFSGIFFIILLTI) form a helical membrane-spanning segment. At 125–141 (DRYLAIVHAVFALKART) the chain is on the cytoplasmic side. Residues 142-166 (VTFGVVTSVITWVVAVFASLPGIIF) traverse the membrane as a helical segment. Topologically, residues 167–198 (TRSQREGLHYTCSSHFPYSQYQFWKNFQTLKI) are extracellular. Residues 199-218 (VILGLVLPLLVMVICYSGIL) traverse the membrane as a helical segment. At 219–235 (KTLLRCRNEKKRHRAVR) the chain is on the cytoplasmic side. The helical transmembrane segment at 236–260 (LIFTIMIVYFLFWAPYNIVLLLNTF) threads the bilayer. Residues 261–277 (QEFFGLNNCSSSNRLDQ) are Extracellular-facing. The chain crosses the membrane as a helical span at residues 278-301 (AMQVTETLGMTHCCINPIIYAFVG). At 302-352 (EKFRNYLLVFFQKHIAKRFCKCCSIFQQEASERASSVYTRSTGEQEISVGL) the chain is on the cytoplasmic side. 3 S-palmitoyl cysteine lipidation sites follow: cysteine 321, cysteine 323, and cysteine 324. A phosphoserine; by BARK1 mark is found at serine 336, serine 337, serine 342, and serine 349.

It belongs to the G-protein coupled receptor 1 family. In terms of assembly, interacts with PRAF2. Efficient ligand binding to CCL3/MIP-1alpha and CCL4/MIP-1beta requires sulfation, O-glycosylation and sialic acid modifications. Glycosylation on Ser-6 is required for efficient binding of CCL4. Interacts with GRK2. Interacts with ARRB1 and ARRB2. Interacts with CNIH4. Interacts with S100A4; this interaction stimulates T-lymphocyte chemotaxis. Post-translationally, sulfated on at least 2 of the N-terminal tyrosines. Sulfation is required for efficient binding of the chemokines, CCL3 and CCL4. In terms of processing, palmitoylation in the C-terminal is important for cell surface expression. Phosphorylation on serine residues in the C-terminal is stimulated by binding CC chemokines especially by APO-RANTES. Post-translationally, O-glycosylated, but not N-glycosylated. Ser-6 appears to be the major site even if Ser-7 may be also O-glycosylated. Also sialylated glycans present which contribute to chemokine binding. Thr-16 and Ser-17 may also be glycosylated and, if so, with small moieties such as a T-antigen.

The protein localises to the cell membrane. Receptor for a number of inflammatory CC-chemokines including CCL3/MIP-1-alpha, CCL4/MIP-1-beta and RANTES and subsequently transduces a signal by increasing the intracellular calcium ion level. May play a role in the control of granulocytic lineage proliferation or differentiation. Participates in T-lymphocyte migration to the infection site by acting as a chemotactic receptor. The sequence is that of C-C chemokine receptor type 5 (CCR5) from Cercocebus galeritus (Tana river mangabey).